An 859-amino-acid chain; its full sequence is MGEVTAEEVEKFLDSNIGFAKQYYNFHYRGKVISDLLGAKEAAVDFSNYHDVNSVEESEIIFDLLRDVQENLQAEKCTFNVMKKLCFLLRADRMSLFMYRTRNGIAELATRLFNVHKDAVLEDCLVMPDSEIVFPLDMGVVGHVAHSKKIANVPNTEEDEHFCDFVDNLTEYQTKNILASPIMNGKDVVAIIMAVNKIDEPHFTKRDEEILLKYLNFVNLIMKVFHLSYLHNCETRRGQILLWSGSKVFEELTDIERQFHKALYTVRAFLNCDRYSVGLLDMTKQKEFFDVWPVLMGEAPAYSGPRTPDGREINFYKVIDYILHGKEDIKVIPNPPADHWALVSGLPTYVAQNGLICNIMNAPAEDFFEFQKEPLDESGWMIKNVLSMPIVNKKEEIVGVATFYNRKDGKPFDDMDETLMESLTQFLGWSVLNPDTYESMNKLENRKDIFQDIVKYHVKCDNEEIQKILKTREVYGKEPWECEEEELAEILQGELPDAESYEINKFHFSDLPLTELELVKCGIQMYYELRVVDKFHIPQEALVRFMYSLSKGYRRITYHNWRHGFNVGQTMFSLLVTGKLKRYFTDLEALAMVTAAFCHDIDHRGTNNLYQMKSQNPLAKLHGSSILERHHLEFGKTLLRDESLNIFQNLNRRQHEHAIHMMDIAIIATDLALYFKKRTMFQKIVDQSKTYESTQEWTQYMMLEQTRKEIVMAMMMTACDLSAITKPWEVQSKVALLVAAEFWEQGDLERTVLQQNPIPMMDRNKADELPKLQVGFIDFVCTFVYKEFSRFHEEITPMLDGITNNRKEWKALADEYEAKMKALEEEKQKQQAAKQAASGNQPGGNPLQGAPASKSCCIQ.

N-acetylglycine is present on Gly-2. 2 consecutive GAF domains span residues 73-222 (QAEK…NLIM) and 254-431 (DIER…GWSV). In terms of domain architecture, PDEase spans 483 to 816 (EEEELAEILQ…KEWKALADEY (334 aa)). Residue His-559 is the Proton donor of the active site. A divalent metal cation-binding residues include His-563, His-599, Asp-600, and Asp-720. The tract at residues 823-859 (LEEEKQKQQAAKQAASGNQPGGNPLQGAPASKSCCIQ) is disordered. Cys-856 carries the post-translational modification Cysteine methyl ester. The S-farnesyl cysteine moiety is linked to residue Cys-856. Residues 857-859 (CIQ) constitute a propeptide, removed in mature form.

The protein belongs to the cyclic nucleotide phosphodiesterase family. In terms of assembly, oligomer composed of two catalytic chains (alpha and beta), an inhibitory chain (gamma) and the delta chain. A divalent metal cation serves as cofactor.

It is found in the cell membrane. It localises to the cell projection. Its subcellular location is the cilium. The protein localises to the photoreceptor outer segment. It carries out the reaction 3',5'-cyclic GMP + H2O = GMP + H(+). Functionally, rod-specific cGMP phosphodiesterase that catalyzes the hydrolysis of 3',5'-cyclic GMP. This protein participates in processes of transmission and amplification of the visual signal. This is Rod cGMP-specific 3',5'-cyclic phosphodiesterase subunit alpha from Mus musculus (Mouse).